We begin with the raw amino-acid sequence, 299 residues long: Ribosomal protein L11 methyltransferase (299 aa).

Residues Thr152, Gly172, Asp194, and Asn234 each contribute to the S-adenosyl-L-methionine site.

Belongs to the methyltransferase superfamily. PrmA family.

It localises to the cytoplasm. The catalysed reaction is L-lysyl-[protein] + 3 S-adenosyl-L-methionine = N(6),N(6),N(6)-trimethyl-L-lysyl-[protein] + 3 S-adenosyl-L-homocysteine + 3 H(+). Methylates ribosomal protein L11. The sequence is that of Ribosomal protein L11 methyltransferase from Geobacter sulfurreducens (strain ATCC 51573 / DSM 12127 / PCA).